A 372-amino-acid chain; its full sequence is MKYDLIIIGSGSVGAAAGYYATRAGLKVLMTDAHMPPHQQGSHHGDTRLIRHAYGEGEKYVPLVLRAQALWDELSAHNEEPIFVRSGVVNLGPADSAFLANVARSAQQRQLNVERLDATALMTRWPEIRVPDNYIGLFEADSGFLRSELAITTWLRLAREAGCAQLFNCPVTRIHHDDNGVTIETGEGRYHASRALLSAGTWVKALAPELPVQPIRKVFAWFQADGRYSVKNRFPAFTGEMPNGDQYYGFPAENNELKIGKHNGGQLIQSQEERKPFAAVASDGAEAFPFLRNVLPGIGGCLHGAACTYDNSPDEDFIIDTLPGHENTLVITGLSGHGFKFAPVLGEIAADFALEKTPSFDLTPFRLSRFSQ.

4–34 (DLIIIGSGSVGAAAGYYATRAGLKVLMTDAH) contributes to the FAD binding site. Cysteine 307 is modified (S-8alpha-FAD cysteine).

Belongs to the MSOX/MTOX family. MTOX subfamily. As to quaternary structure, monomer. It depends on FAD as a cofactor.

It carries out the reaction N(alpha)-methyl-L-tryptophan + O2 + H2O = L-tryptophan + formaldehyde + H2O2. Functionally, catalyzes the oxidative demethylation of N-methyl-L-tryptophan. This chain is N-methyl-L-tryptophan oxidase, found in Salmonella arizonae (strain ATCC BAA-731 / CDC346-86 / RSK2980).